The chain runs to 99 residues: Transcription and mRNA export factor SUS1 (99 aa).

It belongs to the ENY2 family. As to quaternary structure, component of the nuclear pore complex (NPC)-associated TREX-2 complex (transcription and export complex 2), composed of at least SUS1, SAC3, THP1, SEM1, and CDC31. TREX-2 contains 2 SUS1 chains. The TREX-2 complex interacts with the nucleoporin NUP1. Component of the 1.8 MDa SAGA transcription coactivator-HAT complex. SAGA is built of 5 distinct domains with specialized functions. Within the SAGA complex, SUS1, SGF11, SGF73 and UBP8 form an additional subcomplex of SAGA called the DUB module (deubiquitination module). Interacts directly with THP1, SAC3, SGF11, and with the RNA polymerase II.

It localises to the nucleus. Its subcellular location is the nucleoplasm. The protein localises to the cytoplasm. The protein resides in the P-body. Its function is as follows. Involved in mRNA export coupled transcription activation by association with both the TREX-2 and the SAGA complexes. At the promoters, SAGA is required for recruitment of the basal transcription machinery. It influences RNA polymerase II transcriptional activity through different activities such as TBP interaction and promoter selectivity, interaction with transcription activators, and chromatin modification through histone acetylation and deubiquitination. Within the SAGA complex, participates in a subcomplex required for deubiquitination of H2B and for the maintenance of steady-state H3 methylation levels. The TREX-2 complex functions in docking export-competent ribonucleoprotein particles (mRNPs) to the nuclear entrance of the nuclear pore complex (nuclear basket). TREX-2 participates in mRNA export and accurate chromatin positioning in the nucleus by tethering genes to the nuclear periphery. May also be involved in cytoplasmic mRNA decay by interaction with components of P-bodies. The sequence is that of Transcription and mRNA export factor SUS1 from Eremothecium gossypii (strain ATCC 10895 / CBS 109.51 / FGSC 9923 / NRRL Y-1056) (Yeast).